The primary structure comprises 358 residues: DNA polymerase IV (358 aa).

One can recognise a UmuC domain in the interval 4–185; that stretch reads IIHIDMDCYF…LSLRKIPGVG (182 aa). Residues aspartate 8 and aspartate 103 each coordinate Mg(2+). The active site involves glutamate 104.

It belongs to the DNA polymerase type-Y family. Monomer. Requires Mg(2+) as cofactor.

The protein localises to the cytoplasm. The enzyme catalyses DNA(n) + a 2'-deoxyribonucleoside 5'-triphosphate = DNA(n+1) + diphosphate. Functionally, poorly processive, error-prone DNA polymerase involved in untargeted mutagenesis. Copies undamaged DNA at stalled replication forks, which arise in vivo from mismatched or misaligned primer ends. These misaligned primers can be extended by PolIV. Exhibits no 3'-5' exonuclease (proofreading) activity. May be involved in translesional synthesis, in conjunction with the beta clamp from PolIII. This chain is DNA polymerase IV, found in Shewanella sp. (strain W3-18-1).